Consider the following 729-residue polypeptide: Sodium-dependent neutral amino acid transporter B(0)AT2 (729 aa).

Residues 1-69 (MPKNSKVVKR…ARPAWNSKLQ (69 aa)) are Cytoplasmic-facing. Serine 25 and serine 55 each carry phosphoserine. 3 helical membrane-spanning segments follow: residues 70-90 (YILAQVGFSVGLGNVWRFPYL), 98-117 (AYLLPYLILLLVIGIPLFFL), and 142-162 (GIGFASCVVCFFVALYYNVII). The Extracellular segment spans residues 163–225 (GWSLFYFSQS…TSISESGGLN (63 aa)). 2 N-linked (GlcNAc...) asparagine glycosylation sites follow: asparagine 187 and asparagine 213. 4 helical membrane passes run 226-244 (WKMTICLLAAWVVVCLAMI), 253-270 (IMYFSSLFPYVVLICFLI), 306-323 (VFFALGLGFGGVIAFSSY), and 335-356 (VLVSFINFFTSILATLVVFAVL). Residues 357-452 (GFKANVINEK…FIAFTEAMTH (96 aa)) lie on the Extracellular side of the membrane. N-linked (GlcNAc...) asparagine glycosylation is found at asparagine 383 and asparagine 394. A run of 5 helical transmembrane segments spans residues 453 to 472 (FPASPFWSVMFFLMLVNLGL), 496 to 514 (ILTVICCLLAFCIGLIFVQ), 530 to 550 (TLPLLIVVILENIAVSFVYGI), 571 to 592 (YMWKYISPLMLLSLLIASIVNM), and 620 to 642 (VICISLMVLAILPIPVVFIIRRC). Residues 643–729 (NLIDDSSGNL…DMPDMPESDL (87 aa)) lie on the Cytoplasmic side of the membrane. 3 positions are modified to phosphoserine: serine 687, serine 699, and serine 701.

It belongs to the sodium:neurotransmitter symporter (SNF) (TC 2.A.22) family. SLC6A15 subfamily.

Its subcellular location is the membrane. It carries out the reaction L-leucine(in) + Na(+)(in) = L-leucine(out) + Na(+)(out). It catalyses the reaction L-isoleucine(in) + Na(+)(in) = L-isoleucine(out) + Na(+)(out). The enzyme catalyses L-methionine(in) + Na(+)(in) = L-methionine(out) + Na(+)(out). The catalysed reaction is L-proline(in) + Na(+)(in) = L-proline(out) + Na(+)(out). It carries out the reaction L-alanine(in) + Na(+)(in) = L-alanine(out) + Na(+)(out). It catalyses the reaction L-asparagine(in) + Na(+)(in) = L-asparagine(out) + Na(+)(out). The enzyme catalyses L-valine(in) + Na(+)(in) = L-valine(out) + Na(+)(out). The catalysed reaction is L-cysteine(in) + Na(+)(in) = L-cysteine(out) + Na(+)(out). It carries out the reaction L-glutamine(in) + Na(+)(in) = L-glutamine(out) + Na(+)(out). It catalyses the reaction L-serine(in) + Na(+)(in) = L-serine(out) + Na(+)(out). The enzyme catalyses L-threonine(in) + Na(+)(in) = L-threonine(out) + Na(+)(out). The catalysed reaction is L-pipecolate(in) + Na(+)(in) = L-pipecolate(out) + Na(+)(out). It carries out the reaction L-phenylalanine(in) + Na(+)(in) = L-phenylalanine(out) + Na(+)(out). Functionally, functions as a sodium-dependent neutral amino acid transporter. Exhibits preference for the branched-chain amino acids, particularly leucine, valine and isoleucine and methionine. Can also transport low-affinity substrates such as alanine, phenylalanine, glutamine and pipecolic acid. Mediates the saturable, pH-sensitive and electrogenic cotransport of proline and sodium ions with a stoichiometry of 1:1. May have a role as transporter for neurotransmitter precursors into neurons. In contrast to other members of the neurotransmitter transporter family, does not appear to be chloride-dependent. This chain is Sodium-dependent neutral amino acid transporter B(0)AT2 (SLC6A15), found in Bos taurus (Bovine).